A 498-amino-acid polypeptide reads, in one-letter code: Glutamyl-tRNA(Gln) amidotransferase subunit A (498 aa).

Active-site charge relay system residues include K79 and S154. The active-site Acyl-ester intermediate is S178.

Belongs to the amidase family. GatA subfamily. Heterotrimer of A, B and C subunits.

It carries out the reaction L-glutamyl-tRNA(Gln) + L-glutamine + ATP + H2O = L-glutaminyl-tRNA(Gln) + L-glutamate + ADP + phosphate + H(+). Allows the formation of correctly charged Gln-tRNA(Gln) through the transamidation of misacylated Glu-tRNA(Gln) in organisms which lack glutaminyl-tRNA synthetase. The reaction takes place in the presence of glutamine and ATP through an activated gamma-phospho-Glu-tRNA(Gln). The chain is Glutamyl-tRNA(Gln) amidotransferase subunit A from Psychrobacter cryohalolentis (strain ATCC BAA-1226 / DSM 17306 / VKM B-2378 / K5).